A 293-amino-acid polypeptide reads, in one-letter code: Probable 2-(5''-triphosphoribosyl)-3'-dephosphocoenzyme-A synthase (293 aa).

Belongs to the CitG/MdcB family.

It carries out the reaction 3'-dephospho-CoA + ATP = 2'-(5''-triphospho-alpha-D-ribosyl)-3'-dephospho-CoA + adenine. Functionally, involved in the formation of 2-(5''-phosphoribosyl)-3'-dephosphocoenzyme-A, the prosthetic group of the acyl-carrier protein of the malonate decarboxylase. The protein is Probable 2-(5''-triphosphoribosyl)-3'-dephosphocoenzyme-A synthase of Pseudomonas paraeruginosa (strain DSM 24068 / PA7) (Pseudomonas aeruginosa (strain PA7)).